The sequence spans 116 residues: Non-specific lipid-transfer protein C, cotyledon-specific isoform (116 aa).

The first 24 residues, 1 to 24, serve as a signal peptide directing secretion; it reads MKNVVFSVLLLLSFLFCLANTNEA. 4 cysteine pairs are disulfide-bonded: cysteine 28–cysteine 76, cysteine 38–cysteine 53, cysteine 54–cysteine 98, and cysteine 74–cysteine 112.

Belongs to the plant LTP family.

Functionally, plant non-specific lipid-transfer proteins transfer phospholipids as well as galactolipids across membranes. May play a role in wax or cutin deposition in the cell walls of expanding epidermal cells and certain secretory tissues. The protein is Non-specific lipid-transfer protein C, cotyledon-specific isoform of Ricinus communis (Castor bean).